We begin with the raw amino-acid sequence, 968 residues long: Dynein axonemal intermediate chain 3 (968 aa).

Residues 1–33 are compositionally biased toward basic and acidic residues; sequence MKDTSSKRPKSKEANKKKTKDKSNADNLPKPEE. Disordered regions lie at residues 1–39 and 136–166; these read MKDT…ASEP and KPPA…PEPQ. Residues 141–157 show a composition bias toward acidic residues; sequence GADEQMEDEEQQEEEEE. 3 WD repeats span residues 407–447, 480–536, and 712–753; these read ECPD…DRLQ, GHKA…VMVH, and VYSK…RQPS. The stretch at 830 to 857 forms a coiled coil; that stretch reads LHTHTDQLRVLEERVREAKQNLLAVSDR. Residues 897-919 are compositionally biased toward basic and acidic residues; that stretch reads KRQSDHQKKKKETEAEQQKKKTE. The segment at 897–930 is disordered; sequence KRQSDHQKKKKETEAEQQKKKTELVTPPKQEEEV.

In terms of assembly, part of the multisubunit axonemal dynein complex formed at least of two heavy chains and a number of intermediate and light chains.

It is found in the cytoplasm. Its function is as follows. May be involved in the regulation of cilia function. This Danio rerio (Zebrafish) protein is Dynein axonemal intermediate chain 3 (dnai3).